The sequence spans 188 residues: UPF0301 protein Mmwyl1_0539 (188 aa).

The protein belongs to the UPF0301 (AlgH) family.

In Marinomonas sp. (strain MWYL1), this protein is UPF0301 protein Mmwyl1_0539.